The primary structure comprises 300 residues: Diphthine methyl ester synthase (300 aa).

Residues L9, D85, G88, 113–114, and L164 each bind S-adenosyl-L-methionine; that span reads SV. Residue S172 is modified to Phosphoserine. L222 and H247 together coordinate S-adenosyl-L-methionine. S298 is modified (phosphoserine).

Belongs to the diphthine synthase family.

It localises to the cytoplasm. The catalysed reaction is 2-[(3S)-amino-3-carboxypropyl]-L-histidyl-[translation elongation factor 2] + 4 S-adenosyl-L-methionine = diphthine methyl ester-[translation elongation factor 2] + 4 S-adenosyl-L-homocysteine + 3 H(+). It functions in the pathway protein modification; peptidyl-diphthamide biosynthesis. In terms of biological role, S-adenosyl-L-methionine-dependent methyltransferase that catalyzes four methylations of the modified target histidine residue in translation elongation factor 2 (EF-2), to form an intermediate called diphthine methyl ester. The four successive methylation reactions represent the second step of diphthamide biosynthesis. The sequence is that of Diphthine methyl ester synthase (DPH5) from Saccharomyces cerevisiae (strain ATCC 204508 / S288c) (Baker's yeast).